The chain runs to 295 residues: Aspartate carbamoyltransferase catalytic subunit (295 aa).

Residues R49 and T50 each coordinate carbamoyl phosphate. K77 is a binding site for L-aspartate. 3 residues coordinate carbamoyl phosphate: R99, H127, and Q130. Residues R161 and R212 each contribute to the L-aspartate site. G251 and P252 together coordinate carbamoyl phosphate.

Belongs to the aspartate/ornithine carbamoyltransferase superfamily. ATCase family. Heterododecamer (2C3:3R2) of six catalytic PyrB chains organized as two trimers (C3), and six regulatory PyrI chains organized as three dimers (R2).

It catalyses the reaction carbamoyl phosphate + L-aspartate = N-carbamoyl-L-aspartate + phosphate + H(+). It participates in pyrimidine metabolism; UMP biosynthesis via de novo pathway; (S)-dihydroorotate from bicarbonate: step 2/3. Functionally, catalyzes the condensation of carbamoyl phosphate and aspartate to form carbamoyl aspartate and inorganic phosphate, the committed step in the de novo pyrimidine nucleotide biosynthesis pathway. The sequence is that of Aspartate carbamoyltransferase catalytic subunit from Aliarcobacter butzleri (strain RM4018) (Arcobacter butzleri).